We begin with the raw amino-acid sequence, 195 residues long: Calcineurin B homologous protein 1 (195 aa).

The N-myristoyl glycine moiety is linked to residue glycine 2. The Necessary for association with microtubule and interaction with GAPDH motif lies at 2–6; it reads GSRAS. EF-hand domains lie at 26 to 61, 66 to 101, 110 to 145, and 151 to 186; these read SQIT…AINP, IINA…KSKD, SRSN…MVGV, and QLGS…VDVE. Residues aspartate 123, aspartate 125, aspartate 127, lysine 129, and glutamate 134 each contribute to the Ca(2+) site. The Nuclear export signal 1 signature appears at 138 to 147; that stretch reads VLRMMVGVNI. Residues 143 to 185 are necessary for nuclear export signal; that stretch reads VGVNISDEQLGSIADRTIQEADQDGDSAISFTEFVKVLEKVDV. Ca(2+) is bound by residues aspartate 164, aspartate 166, aspartate 168, and glutamate 175. The Nuclear export signal 2 signature appears at 176–185; it reads FVKVLEKVDV.

Belongs to the calcineurin regulatory subunit family. CHP subfamily. In terms of assembly, monomer. Interacts with STK17B; the interaction occurs in a calcium-independent manner and induces the translocation of CHP1 from the Golgi to the nucleus. Interacts with GAPDH; the interaction is direct, occurs in a N-myristoylation-dependent manner and facilitates the ability of CHP1 to bind microtubules. Interacts with KIF1B (via the C-terminal end of the kinesin-motor domain); the interaction occurs in a calcium-dependent manner. Associates (via C-terminal domain) with microtubules; the association occurs with polymerized microtubules during the cell cycle in a myristoylation- and calcium-independent manner and is enhanced by GAPDH. Interacts with PPP3CA. Interacts with SLC9A1/NHE1 (via the C-terminal domain); the interaction occurs at the plasma membrane in a calcium-dependent manner and at a domain that is critical for growth factor stimulation of the exchanger. Interacts with SLC9A3; increases SLC9A3 trafficking and activity at the plasma membrane. In terms of processing, phosphorylated; decreased phosphorylation is associated with an increase in SLC9A1/NHE1 Na(+)/H(+) exchange activity. Phosphorylation occurs in serum-dependent manner. The phosphorylation state may regulate the binding to SLC9A1/NHE1. Both N-myristoylation and calcium-mediated conformational changes are essential for its function in exocytic traffic. N-myristoylation is required for its association with microtubules and interaction with GAPDH, but not for the constitutive association to membranes. As to expression, ubiquitously expressed. Has been found in fetal eye, lung, liver, muscle, heart, kidney, thymus and spleen.

It is found in the nucleus. Its subcellular location is the cytoplasm. It localises to the cytoskeleton. The protein resides in the endomembrane system. The protein localises to the endoplasmic reticulum-Golgi intermediate compartment. It is found in the endoplasmic reticulum. Its subcellular location is the cell membrane. It localises to the membrane. Its function is as follows. Calcium-binding protein involved in different processes such as regulation of vesicular trafficking, plasma membrane Na(+)/H(+) exchanger and gene transcription. Involved in the constitutive exocytic membrane traffic. Mediates the association between microtubules and membrane-bound organelles of the endoplasmic reticulum and Golgi apparatus and is also required for the targeting and fusion of transcytotic vesicles (TCV) with the plasma membrane. Functions as an integral cofactor in cell pH regulation by controlling plasma membrane-type Na(+)/H(+) exchange activity. Affects the pH sensitivity of SLC9A1/NHE1 by increasing its sensitivity at acidic pH. Required for the stabilization and localization of SLC9A1/NHE1 at the plasma membrane. Inhibits serum- and GTPase-stimulated Na(+)/H(+) exchange. Plays a role as an inhibitor of ribosomal RNA transcription by repressing the nucleolar UBF1 transcriptional activity. May sequester UBF1 in the nucleoplasm and limit its translocation to the nucleolus. Associates to the ribosomal gene promoter. Acts as a negative regulator of the calcineurin/NFAT signaling pathway. Inhibits NFAT nuclear translocation and transcriptional activity by suppressing the calcium-dependent calcineurin phosphatase activity. Also negatively regulates the kinase activity of the apoptosis-induced kinase STK17B. Inhibits both STK17B auto- and substrate-phosphorylations in a calcium-dependent manner. The protein is Calcineurin B homologous protein 1 (CHP1) of Homo sapiens (Human).